Consider the following 84-residue polypeptide: Cell division topological specificity factor (84 aa).

The protein belongs to the MinE family.

Prevents the cell division inhibition by proteins MinC and MinD at internal division sites while permitting inhibition at polar sites. This ensures cell division at the proper site by restricting the formation of a division septum at the midpoint of the long axis of the cell. This is Cell division topological specificity factor from Pseudomonas syringae pv. syringae (strain B728a).